The primary structure comprises 363 residues: Heat-inducible transcription repressor HrcA (363 aa).

The protein belongs to the HrcA family.

Its function is as follows. Negative regulator of class I heat shock genes (grpE-dnaK-dnaJ and groELS operons). Prevents heat-shock induction of these operons. This is Heat-inducible transcription repressor HrcA from Rhizobium radiobacter (Agrobacterium tumefaciens).